The chain runs to 160 residues: Cyanate hydratase (160 aa).

Catalysis depends on residues arginine 100, glutamate 103, and serine 126.

The protein belongs to the cyanase family.

The catalysed reaction is cyanate + hydrogencarbonate + 3 H(+) = NH4(+) + 2 CO2. Functionally, catalyzes the reaction of cyanate with bicarbonate to produce ammonia and carbon dioxide. The protein is Cyanate hydratase of Aspergillus niger (strain ATCC MYA-4892 / CBS 513.88 / FGSC A1513).